A 212-amino-acid chain; its full sequence is MGIGVIGTKVGMTRVFNEDGVSTPVTVVEVSPNRITQIKNNETDGYDAIQVTFGSKHAGRVSKPEAGHYAKAGVEAGQGLWEFRLDDVSEVEGLEPGSEITVEKFNDVAVVDVSGTTKGKGFQGGVKRHNFKMQDATHGNSVSHRAPGSIGQNQTPGRVFKGKKMAGHMGNVKQTTLNLELVKVDVENSLLLIKGALPGAKGSTVIVRKAIK.

Residue Gln-154 is modified to N5-methylglutamine.

The protein belongs to the universal ribosomal protein uL3 family. Part of the 50S ribosomal subunit. Forms a cluster with proteins L14 and L19. Methylated by PrmB.

Its function is as follows. One of the primary rRNA binding proteins, it binds directly near the 3'-end of the 23S rRNA, where it nucleates assembly of the 50S subunit. The polypeptide is Large ribosomal subunit protein uL3 (Hydrogenovibrio crunogenus (strain DSM 25203 / XCL-2) (Thiomicrospira crunogena)).